We begin with the raw amino-acid sequence, 563 residues long: F-box/kelch-repeat protein At5g42360 (563 aa).

In terms of domain architecture, F-box spans 129 to 175; the sequence is YRKHVYLPDDILEMCLMRLPLTSLLNAHLVCKKWQSMANTQRFLQMR. Kelch repeat units lie at residues 184 to 231, 232 to 282, and 355 to 402; these read WLFL…SIHE, EIYI…ATEV, and VLIA…IICN.

The sequence is that of F-box/kelch-repeat protein At5g42360 from Arabidopsis thaliana (Mouse-ear cress).